The following is a 108-amino-acid chain: MILSTTNTIEGATITSYQGVVTAEVVYGTNALRDFFAGIRDMIGGRTASYERIFEKGHQEALRELESNAQKRGADAVIGISMDTGTINVDDKGVLLLITATGTAVKLG.

The protein belongs to the UPF0145 family.

The chain is UPF0145 protein SYNPCC7002_A1337 from Picosynechococcus sp. (strain ATCC 27264 / PCC 7002 / PR-6) (Agmenellum quadruplicatum).